The sequence spans 530 residues: Membrane-associated transporter protein (530 aa).

At 1–46 (MGSNSGQAGRHIYKSLADDGPFDSVEPPKRPTSRLIMHSMAMFGRE) the chain is on the cytoplasmic side. A helical transmembrane segment spans residues 47 to 67 (FCYAVEAAYVTPVLLSVGLPS). Residue S68 is a topological domain, extracellular. The chain crosses the membrane as a helical span at residues 69-89 (LYSIVWFLSPILGFLLQPVVG). Residues 90–110 (SASDHCRSRWGRRRPYILTLG) are Cytoplasmic-facing. The chain crosses the membrane as a helical span at residues 111 to 131 (VMMLVGMALYLNGATVVAALI). Topologically, residues 132 to 138 (ANPRRKL) are extracellular. The chain crosses the membrane as a helical span at residues 139 to 159 (VWAISVTMIGVVLFDFAADFI). At 160 to 184 (DGPIKAYLFDVCSHQDKEKGLHYHA) the chain is on the cytoplasmic side. Residues 185–205 (LFTGFGGALGYLLGAIDWAHL) form a helical membrane-spanning segment. The Extracellular segment spans residues 206–216 (ELGRLLGTEFQ). Residues 217 to 237 (VMFFFSALVLTLCFTVHLCSI) form a helical membrane-spanning segment. The Cytoplasmic portion of the chain corresponds to 238–318 (SEAPLTEVAK…ALVNMPPHYR (81 aa)). Residues 319–339 (YLCISHLIGWTAFLSNMLFFT) form a helical membrane-spanning segment. At 340–366 (DFMGQIVYRGDPYSAHNSTEFLIYERG) the chain is on the extracellular side. The N-linked (GlcNAc...) asparagine glycan is linked to N356. Residues 367 to 387 (VEVGCWGLCINSVFSSLYSYF) traverse the membrane as a helical segment. The Cytoplasmic segment spans residues 388 to 398 (QKVLVSYIGLK). Residues 399–419 (GLYFTGYLLFGLGTGFIGLFP) form a helical membrane-spanning segment. The Extracellular segment spans residues 420–425 (NVYSTL). A helical transmembrane segment spans residues 426 to 446 (VLCSLFGVMSSTLYTVPFNLI). The Cytoplasmic segment spans residues 447 to 477 (TEYHREEEKERQQAPGGDPDNSVRGKGMDCA). Residues 478-498 (TLTCMVQLAQILVGGGLGFLV) traverse the membrane as a helical segment. The Extracellular segment spans residues 499 to 504 (NTAGTV). A helical membrane pass occupies residues 505–525 (VVVVITASAVALIGCCFVALF). The Cytoplasmic portion of the chain corresponds to 526–530 (VRYVD).

This sequence belongs to the glycoside-pentoside-hexuronide (GPH) cation symporter transporter (TC 2.A.2) family. As to quaternary structure, interacts with TYRP1. As to expression, expressed in mature melanocytes.

The protein resides in the melanosome membrane. The enzyme catalyses sucrose(out) + H(+)(out) = sucrose(in) + H(+)(in). The catalysed reaction is D-glucose(out) + H(+)(out) = D-glucose(in) + H(+)(in). In terms of biological role, proton-associated glucose and sucrose transporter. May be able to transport also fructose. Expressed at a late melanosome maturation stage where functions as proton/glucose exporter which increase lumenal pH by decreasing glycolysis. Regulates melanogenesis by maintaining melanosome neutralization that is initially initiated by transient OCA2 and required for a proper function of the tyrosinase TYR. The chain is Membrane-associated transporter protein from Homo sapiens (Human).